We begin with the raw amino-acid sequence, 85 residues long: Makatoxin-2 (85 aa).

The N-terminal stretch at 1 to 19 (MNYLIVISFALLLMTSVES) is a signal peptide. In terms of domain architecture, LCN-type CS-alpha/beta spans 21–83 (RDAYIADSEN…VPIRIPGPCR (63 aa)). Disulfide bonds link Cys31–Cys82, Cys35–Cys55, Cys41–Cys65, and Cys45–Cys67.

It belongs to the long (4 C-C) scorpion toxin superfamily. Sodium channel inhibitor family. Alpha subfamily. Expressed by the venom gland.

The protein resides in the secreted. Its function is as follows. This protein markedly relaxes the rat carbachol-precontracted anococcygeus muscle. This relaxation is inhibited by the inhibitor of nitric oxide (NO) synthase, N-nitro-L-arginine methyl ester (L-NAME), suggesting that the response induced by this protein is NO-mediated. This chain is Makatoxin-2, found in Olivierus martensii (Manchurian scorpion).